A 328-amino-acid polypeptide reads, in one-letter code: Transcription initiation factor TFIID subunit 8 (328 aa).

Residues 16 to 83 (RRILNKVVSQ…DVSLALINMG (68 aa)) enclose the Histone-fold domain. The interval 229–309 (NRTEDEPSKD…PGTMPSRSLA (81 aa)) is disordered. Residues S236, S245, and S255 each carry the phosphoserine modification. Acidic residues predominate over residues 239–251 (DGEEGDSENEEMD). Residues 252 to 264 (GDKSKEEKPELDI) are compositionally biased toward basic and acidic residues. The span at 296 to 309 (NCPTPGTMPSRSLA) shows a compositional bias: polar residues.

It belongs to the TAF8 family. In terms of assembly, belongs to the TFIID complex which is composed of TATA binding protein (Tbp) and a number of TBP-associated factors (TAFs). Histone fold interacts with N-terminus of Taf10b.

It is found in the nucleus. Its function is as follows. TFIID is a multimeric protein complex that plays a central role in mediating promoter responses to various activators and repressors. The protein is Transcription initiation factor TFIID subunit 8 of Drosophila melanogaster (Fruit fly).